We begin with the raw amino-acid sequence, 287 residues long: Small ribosomal subunit biogenesis GTPase RsgA (287 aa).

The 158-residue stretch at 61-218 folds into the CP-type G domain; it reads SSELIRPTVA…LVDTPGFTTL (158 aa). Residues 110–113 and 161–169 contribute to the GTP site; these read NKED and GPSGAGKST. Zn(2+) is bound by residues Cys-242, Cys-247, His-249, and Cys-255.

It belongs to the TRAFAC class YlqF/YawG GTPase family. RsgA subfamily. In terms of assembly, monomer. Associates with 30S ribosomal subunit, binds 16S rRNA. Zn(2+) is required as a cofactor.

It localises to the cytoplasm. Functionally, one of several proteins that assist in the late maturation steps of the functional core of the 30S ribosomal subunit. Helps release RbfA from mature subunits. May play a role in the assembly of ribosomal proteins into the subunit. Circularly permuted GTPase that catalyzes slow GTP hydrolysis, GTPase activity is stimulated by the 30S ribosomal subunit. The chain is Small ribosomal subunit biogenesis GTPase RsgA from Clostridium perfringens (strain 13 / Type A).